We begin with the raw amino-acid sequence, 84 residues long: MSILSFLLGEKKKSASVAKERLQIILAHERTGHSAPADYLPALQRELVAVISKYVKISDQDLRVSLERQDNLEVLEVKIEIPQN.

This sequence belongs to the MinE family.

Prevents the cell division inhibition by proteins MinC and MinD at internal division sites while permitting inhibition at polar sites. This ensures cell division at the proper site by restricting the formation of a division septum at the midpoint of the long axis of the cell. The chain is Cell division topological specificity factor from Cupriavidus pinatubonensis (strain JMP 134 / LMG 1197) (Cupriavidus necator (strain JMP 134)).